The chain runs to 591 residues: MMRSHYCGQLNETLEGQEITLCGWVHRRRDHGGVIFLDIRDRDGLAQVVFDPDRAESFAAADRVRSEYVVKITGKVRLRPAGAVNKNMASGGIEVLGYELEVLNESETPPFPLNEYSDVGEETRLRYRFLDLRRPEMAEKLRLRSRMTTSIRRFLDENGFLDVETPILTRATPEGARDYLVPSRTHAGSFFALPQSPQLFKQLLMVAGFDRYYQIAKCFRDEDLRADRQPEFTQIDIETSFLDEKEIMGLTEQMIRNLFKEVLDLEFGDFPHMTFEEAMRRYGSDKPDLRNPLELVDVADQLKDVDFKVFSGPANDPKCRIAALRVPGGASMPRKQIDDYTKFVGIYGAKGLAYIKVNERANGVDGLQSPIVKNIPLDNLNAILDRVGAVDGDIVFFGADKAKIVSEALGALRIKLGHDLNLLTCEWAPMWVVDFPMFEENDDGSFSALHHPFTAPKCSPAELEANPAGALSRAYDMVLNGTELGGGSIRIHRKEMQQAVFRLLGINEAEQEEKFGFLLDALKYGAPPHGGLAFGLDRLVMLMTGAQSIREVIAFPKTQSAADVMTQAPGVVDAKALRELHIRLRETPKAE.

E174 is a binding site for L-aspartate. Residues 198-201 (QLFK) form an aspartate region. R220 serves as a coordination point for L-aspartate. ATP contacts are provided by residues 220 to 222 (RDE) and Q229. H450 lines the L-aspartate pocket. Position 483 (E483) interacts with ATP. R490 serves as a coordination point for L-aspartate. 535–538 (GLDR) contributes to the ATP binding site.

Belongs to the class-II aminoacyl-tRNA synthetase family. Type 1 subfamily. Homodimer.

The protein resides in the cytoplasm. It carries out the reaction tRNA(Asx) + L-aspartate + ATP = L-aspartyl-tRNA(Asx) + AMP + diphosphate. Its function is as follows. Aspartyl-tRNA synthetase with relaxed tRNA specificity since it is able to aspartylate not only its cognate tRNA(Asp) but also tRNA(Asn). Reaction proceeds in two steps: L-aspartate is first activated by ATP to form Asp-AMP and then transferred to the acceptor end of tRNA(Asp/Asn). The chain is Aspartate--tRNA(Asp/Asn) ligase from Pseudomonas fluorescens (strain SBW25).